We begin with the raw amino-acid sequence, 346 residues long: 3 beta-hydroxysteroid dehydrogenase/Delta 5--&gt;4-isomerase (346 aa).

Y147 serves as the catalytic Proton acceptor. K151 serves as a coordination point for NAD(+).

The protein belongs to the 3-beta-HSD family.

The enzyme catalyses a 3beta-hydroxy-Delta(5)-steroid + NAD(+) = a 3-oxo-Delta(5)-steroid + NADH + H(+). The catalysed reaction is a 3-oxo-Delta(5)-steroid = a 3-oxo-Delta(4)-steroid. It functions in the pathway lipid metabolism; steroid biosynthesis. In terms of biological role, catalyzes the oxidative conversion of Delta(5)-ene-3-beta-hydroxy steroid, and the oxidative conversion of ketosteroids. The 3-beta-HSD enzymatic system plays a crucial role in the biosynthesis of all classes of hormonal steroids. During viral infection, steroid production contributes to virulence by inhibiting the host inflammatory response. This chain is 3 beta-hydroxysteroid dehydrogenase/Delta 5--&gt;4-isomerase (OPG174), found in Homo sapiens (Human).